The chain runs to 145 residues: 3-dehydroquinate dehydratase (145 aa).

Catalysis depends on tyrosine 24, which acts as the Proton acceptor. Substrate-binding residues include asparagine 75, histidine 81, and aspartate 88. The active-site Proton donor is the histidine 101. Substrate-binding positions include 102 to 103 and arginine 112; that span reads IS.

The protein belongs to the type-II 3-dehydroquinase family. In terms of assembly, homododecamer.

It carries out the reaction 3-dehydroquinate = 3-dehydroshikimate + H2O. It functions in the pathway metabolic intermediate biosynthesis; chorismate biosynthesis; chorismate from D-erythrose 4-phosphate and phosphoenolpyruvate: step 3/7. Catalyzes a trans-dehydration via an enolate intermediate. The protein is 3-dehydroquinate dehydratase of Corynebacterium glutamicum (strain R).